The primary structure comprises 432 residues: Proteinase-activated receptor 1 (432 aa).

The N-terminal stretch at 1 to 21 (MGPRRLLLVAVGLSLCGPLLS) is a signal peptide. Positions 22–45 (SRVPMRQPESERMYATPYATPNPR) are cleaved as a propeptide — removed for receptor activation. The Extracellular segment spans residues 46–109 (SFFLRNPSED…SGYLTSPWLT (64 aa)). 2 N-linked (GlcNAc...) asparagine glycosylation sites follow: Asn69 and Asn82. Residues 110 to 135 (LFIPSVYTFVFIVSLPLNILAIAVFV) form a helical membrane-spanning segment. Topologically, residues 136–144 (FRMKVKKPA) are cytoplasmic. A helical transmembrane segment spans residues 145 to 164 (VVYMLHLAMADVLFVSVLPF). Residues 165 to 183 (KISYYFSGTDWQFGSGMCR) lie on the Extracellular side of the membrane. An intrachain disulfide couples Cys182 to Cys261. Residues 184–205 (FATAACYCNMYASIMLMTVISI) traverse the membrane as a helical segment. Residues 206-225 (DRFLAVVYPIQSLSWRTLGR) are Cytoplasmic-facing. A helical transmembrane segment spans residues 226-246 (ANFTCVVIWVMAIMGVVPLLL). Residues 247–275 (KEQTTQVPGLNITTCHDVLNETLLHGFYS) are Extracellular-facing. N-linked (GlcNAc...) asparagine glycans are attached at residues Asn257 and Asn266. Residues 276–295 (YYFSAFSAIFFLVPLIISTV) traverse the membrane as a helical segment. The Cytoplasmic portion of the chain corresponds to 296-318 (CYTSIIRCLSSSAVANRSKKSRA). A helical transmembrane segment spans residues 319 to 341 (LFLSAAVFCIFIVCFGPTNVLLI). At 342-357 (VHYLLLSDSPGTETAY) the chain is on the extracellular side. Residues 358-381 (FAYLLCVCVTSVASCIDPLIYYYA) traverse the membrane as a helical segment. Topologically, residues 382–432 (SSECQKHLYSILCCRESSDSNSCNSTGQLMPSKMDTCSSHLNNSIYKKLLA) are cytoplasmic. Residue Ser425 is modified to Phosphoserine.

This sequence belongs to the G-protein coupled receptor 1 family. Post-translationally, proteolytic cleavage by thrombin generates a new N-terminus that functions as a tethered ligand. Also proteolytically cleaved by cathepsin CTSG. Phosphorylated in the C-terminal tail; probably mediating desensitization prior to the uncoupling and internalization of the receptor. Expressed in primary cultured oligodendrocytes.

Its subcellular location is the cell membrane. Functionally, high affinity receptor that binds the activated thrombin, leading to calcium release from intracellular stores. The thrombin-activated receptor signaling pathway is mediated through PTX-insensitive G proteins, activation of phospholipase C resulting in the production of 1D-myo-inositol 1,4,5-trisphosphate (InsP3) which binds to InsP3 receptors causing calcium release from the stores. In astrocytes, the calcium released into the cytosol allows the Ca(2+)-dependent release of L-glutamate into the synaptic cleft through BEST1, that targets the neuronal postsynaptic GRIN2A/NMDAR receptor resulting in the synaptic plasticity regulation. May play a role in platelets activation and in vascular development. Mediates up-regulation of pro-inflammatory cytokines, such as MCP-1/CCL2 and IL6, triggered by coagulation factor Xa (F10) in cardiac fibroblasts and umbilical vein endothelial cells. The protein is Proteinase-activated receptor 1 of Rattus norvegicus (Rat).